We begin with the raw amino-acid sequence, 62 residues long: Photosystem II reaction center protein Z (62 aa).

A run of 2 helical transmembrane segments spans residues 8 to 28 and 41 to 61; these read AVFA…AVFA and FSGA…NSSV.

It belongs to the PsbZ family. In terms of assembly, PSII is composed of 1 copy each of membrane proteins PsbA, PsbB, PsbC, PsbD, PsbE, PsbF, PsbH, PsbI, PsbJ, PsbK, PsbL, PsbM, PsbT, PsbY, PsbZ, Psb30/Ycf12, at least 3 peripheral proteins of the oxygen-evolving complex and a large number of cofactors. It forms dimeric complexes.

The protein localises to the plastid. It localises to the chloroplast thylakoid membrane. Functionally, may control the interaction of photosystem II (PSII) cores with the light-harvesting antenna, regulates electron flow through the 2 photosystem reaction centers. PSII is a light-driven water plastoquinone oxidoreductase, using light energy to abstract electrons from H(2)O, generating a proton gradient subsequently used for ATP formation. The sequence is that of Photosystem II reaction center protein Z from Selaginella uncinata (Blue spike-moss).